The sequence spans 294 residues: MQVEVFKVKLSDLLCLTKPKQTFLLLLTSIFTYVGAGGMRLDALLLLTAAMLLSISGTTSVNMALDADIDAMMPRTKDRPVPSGRVSRVEALSFGLLLFIVGLGLSYLINPWTAFATSLGMAFDILVYTMWTKRRTPLSIIFGGVAGAAPSLAGWAAARGSIELQAIMIALITILWIPSHIWYISIYYLDDYAAARVPMAPVVWGIERTSKLIVASNVLMIILQLLLFLMGPLGPIFLVLSLPITLRFLIHSIRYARSPSRGEARRMYKVASPVEGVIFLAIALDGIFRILWSS.

The next 8 membrane-spanning stretches (helical) occupy residues 19–39, 41–61, 89–109, 111–131, 138–158, 166–186, 218–238, and 272–292; these read PKQTFLLLLTSIFTYVGAGGM, LDALLLLTAAMLLSISGTTSV, VEALSFGLLLFIVGLGLSYLI, PWTAFATSLGMAFDILVYTMW, LSIIFGGVAGAAPSLAGWAAA, AIMIALITILWIPSHIWYISI, VLMIILQLLLFLMGPLGPIFL, and SPVEGVIFLAIALDGIFRILW.

This sequence belongs to the UbiA prenyltransferase family. Protoheme IX farnesyltransferase subfamily.

The protein localises to the cell membrane. The enzyme catalyses heme b + (2E,6E)-farnesyl diphosphate + H2O = Fe(II)-heme o + diphosphate. Its pathway is porphyrin-containing compound metabolism; heme O biosynthesis; heme O from protoheme: step 1/1. Converts heme B (protoheme IX) to heme O by substitution of the vinyl group on carbon 2 of heme B porphyrin ring with a hydroxyethyl farnesyl side group. This chain is Protoheme IX farnesyltransferase, found in Korarchaeum cryptofilum (strain OPF8).